The sequence spans 366 residues: ERCC4 domain-containing protein EP364R (366 aa).

The region spanning F3–A101 is the ERCC4 domain.

This sequence belongs to the asfivirus EP364R family.

In terms of biological role, plays a role in the inhibition of type I interferon signaling pathway. Mechanistically, specifically interacts with 2',3'-cGAMP and cleaves it via its phosphodiesterase activity. In turn, prevents 2',3'-cGAMP interaction with host ER-resident STING1 leading to inhibition of downstream signaling pathway and type I interferon production. The sequence is that of ERCC4 domain-containing protein EP364R from African swine fever virus (isolate Pig/Kenya/KEN-50/1950) (ASFV).